We begin with the raw amino-acid sequence, 156 residues long: Small ribosomal subunit protein uS7c (156 aa).

The protein belongs to the universal ribosomal protein uS7 family. Part of the 30S ribosomal subunit.

Its subcellular location is the plastid. It is found in the chloroplast. Its function is as follows. One of the primary rRNA binding proteins, it binds directly to 16S rRNA where it nucleates assembly of the head domain of the 30S subunit. The protein is Small ribosomal subunit protein uS7c (rps7) of Phaeodactylum tricornutum (strain CCAP 1055/1).